The following is a 433-amino-acid chain: WD repeat domain phosphoinositide-interacting protein 1 (433 aa).

A Nuclear receptor interaction motif is present at residues 127–132 (LLKTLL). WD repeat units lie at residues 136-177 (RNPH…CECT) and 180-220 (AHDS…KLYE). The short motif at 221–224 (FRRG) is the L/FRRG motif element. 2 WD repeats span residues 226 to 265 (KRYV…ERSE) and 296 to 346 (DRAF…GGEC).

It belongs to the WD repeat PROPPIN family.

It localises to the golgi apparatus. It is found in the trans-Golgi network. The protein localises to the endosome. Its subcellular location is the cytoplasmic vesicle. The protein resides in the clathrin-coated vesicle. It localises to the preautophagosomal structure membrane. It is found in the cytoplasm. The protein localises to the cytoskeleton. In terms of biological role, component of the autophagy machinery that controls the major intracellular degradation process by which cytoplasmic materials are packaged into autophagosomes and delivered to lysosomes for degradation. Plays an important role in starvation- and calcium-mediated autophagy, as well as in mitophagy. Functions downstream of the ulk1 and PI3-kinases that produce phosphatidylinositol 3-phosphate (PtdIns3P) on membranes of the endoplasmic reticulum once activated. Binds phosphatidylinositol 3-phosphate (PtdIns3P), and maybe other phosphoinositides including PtdIns3,5P2 and PtdIns5P, and is recruited to phagophore assembly sites at the endoplasmic reticulum membranes. There, it assists wipi2 in the recruitment of atg12-atg5-atg16l1, a complex that directly controls the elongation of the nascent autophagosomal membrane. Together with wdr45/wipi4, promotes atg2 (atg2a or atg2b)-mediated lipid transfer by enhancing atg2-association with phosphatidylinositol 3-monophosphate (PI3P)-containing membranes. The sequence is that of WD repeat domain phosphoinositide-interacting protein 1 (wipi1) from Xenopus laevis (African clawed frog).